Reading from the N-terminus, the 339-residue chain is Phenylalanine--tRNA ligase alpha subunit (339 aa).

Glu-254 contributes to the Mg(2+) binding site.

It belongs to the class-II aminoacyl-tRNA synthetase family. Phe-tRNA synthetase alpha subunit type 1 subfamily. Tetramer of two alpha and two beta subunits. It depends on Mg(2+) as a cofactor.

Its subcellular location is the cytoplasm. The catalysed reaction is tRNA(Phe) + L-phenylalanine + ATP = L-phenylalanyl-tRNA(Phe) + AMP + diphosphate + H(+). This Clostridium botulinum (strain 657 / Type Ba4) protein is Phenylalanine--tRNA ligase alpha subunit.